Consider the following 429-residue polypeptide: Tryptophan synthase beta chain 2 (429 aa).

The segment at 18-40 (NINPDLPSPLPEPKNPEGGKNIE) is disordered. K110 bears the N6-(pyridoxal phosphate)lysine mark.

The protein belongs to the TrpB family. As to quaternary structure, tetramer of two alpha and two beta chains. Requires pyridoxal 5'-phosphate as cofactor.

It catalyses the reaction (1S,2R)-1-C-(indol-3-yl)glycerol 3-phosphate + L-serine = D-glyceraldehyde 3-phosphate + L-tryptophan + H2O. Its pathway is amino-acid biosynthesis; L-tryptophan biosynthesis; L-tryptophan from chorismate: step 5/5. The beta subunit is responsible for the synthesis of L-tryptophan from indole and L-serine. The polypeptide is Tryptophan synthase beta chain 2 (trpB2) (Methanothermobacter thermautotrophicus (strain ATCC 29096 / DSM 1053 / JCM 10044 / NBRC 100330 / Delta H) (Methanobacterium thermoautotrophicum)).